Here is a 265-residue protein sequence, read N- to C-terminus: MICOS complex subunit Mic27 (265 aa).

The N-terminal 27 residues, 1-27 (MAAFRMGKLTTIPAGLIYASINVRLAK), are a transit peptide targeting the mitochondrion. Topologically, residues 28–110 (EEEPKKQLVR…YVYLKNPPQD (83 aa)) are mitochondrial intermembrane. The helical transmembrane segment at 111–129 (FLPKMGVITASGLAGLLSA) threads the bilayer. The Mitochondrial matrix portion of the chain corresponds to 130–137 (RKGSRFKK). Residues 138 to 155 (IAYPLGLATLGATVCYPA) form a helical membrane-spanning segment. The Mitochondrial intermembrane segment spans residues 156–265 (QSVIIAKITG…DDKDMYSTRS (110 aa)). Disordered regions lie at residues 187–215 (SENESLPEPKEESKEGRSDEIHASLPDLK) and 229–265 (VIKSESTSGTTQFIPDPKLMDHGQSHPDDKDMYSTRS). S204 carries the phosphoserine modification. The segment covering 229 to 241 (VIKSESTSGTTQF) has biased composition (polar residues). Residues 246 to 265 (KLMDHGQSHPDDKDMYSTRS) show a composition bias toward basic and acidic residues.

This sequence belongs to the apolipoprotein O/MICOS complex subunit Mic27 family. In terms of assembly, component of the mitochondrial contact site and cristae organizing system (MICOS) complex, composed of at least MICOS10/MIC10, CHCHD3/MIC19, CHCHD6/MIC25, APOOL/MIC27, IMMT/MIC60, APOO/MIC23/MIC26 and MICOS13/MIC13. This complex was also known under the names MINOS or MitOS complex. The MICOS complex associates with mitochondrial outer membrane proteins SAMM50, MTX1 and MTX2 (together described as components of the mitochondrial outer membrane sorting assembly machinery (SAM) complex) and DNAJC11, mitochondrial inner membrane protein TMEM11 and with HSPA9. The MICOS and SAM complexes together with DNAJC11 are part of a large protein complex spanning both membranes termed the mitochondrial intermembrane space bridging (MIB) complex. Interacts with MICOS10/MIC10, IMMT/MIC60 and APOO/MIC23/MIC26.

Its subcellular location is the mitochondrion inner membrane. It localises to the mitochondrion. Component of the MICOS complex, a large protein complex of the mitochondrial inner membrane that plays crucial roles in the maintenance of crista junctions, inner membrane architecture, and formation of contact sites to the outer membrane. Specifically binds to cardiolipin (in vitro) but not to the precursor lipid phosphatidylglycerol. Plays a crucial role in crista junction formation and mitochondrial function. The sequence is that of MICOS complex subunit Mic27 (Apool) from Mus musculus (Mouse).